A 258-amino-acid chain; its full sequence is Indole-3-glycerol phosphate synthase (258 aa).

The protein belongs to the TrpC family.

The catalysed reaction is 1-(2-carboxyphenylamino)-1-deoxy-D-ribulose 5-phosphate + H(+) = (1S,2R)-1-C-(indol-3-yl)glycerol 3-phosphate + CO2 + H2O. The protein operates within amino-acid biosynthesis; L-tryptophan biosynthesis; L-tryptophan from chorismate: step 4/5. This is Indole-3-glycerol phosphate synthase from Campylobacter jejuni subsp. jejuni serotype O:23/36 (strain 81-176).